The primary structure comprises 120 residues: Flagellar transcriptional regulator FlhD (120 aa).

This sequence belongs to the FlhD family. In terms of assembly, homodimer; disulfide-linked. Forms a heterohexamer composed of two FlhC and four FlhD subunits. Each FlhC binds a FlhD dimer, forming a heterotrimer, and a hexamer assembles by dimerization of two heterotrimers.

The protein localises to the cytoplasm. Functions in complex with FlhC as a master transcriptional regulator that regulates transcription of several flagellar and non-flagellar operons by binding to their promoter region. Activates expression of class 2 flagellar genes, including fliA, which is a flagellum-specific sigma factor that turns on the class 3 genes. Also regulates genes whose products function in a variety of physiological pathways. This is Flagellar transcriptional regulator FlhD from Erwinia tasmaniensis (strain DSM 17950 / CFBP 7177 / CIP 109463 / NCPPB 4357 / Et1/99).